The following is a 386-amino-acid chain: Chaperone protein DnaJ (386 aa).

Residues 3-68 (DYYEILEVAR…KKRQVYDRYG (66 aa)) enclose the J domain. A CR-type zinc finger spans residues 146-224 (GVDKELVISN…CKGQGAVKEK (79 aa)). Residues Cys159, Cys162, Cys176, Cys179, Cys198, Cys201, Cys212, and Cys215 each contribute to the Zn(2+) site. CXXCXGXG motif repeat units follow at residues 159–166 (CNVCNGKG), 176–183 (CSECKGRG), 198–205 (CPKCHGEG), and 212–219 (CKNCKGQG).

Belongs to the DnaJ family. As to quaternary structure, homodimer. Zn(2+) is required as a cofactor.

The protein resides in the cytoplasm. Its function is as follows. Participates actively in the response to hyperosmotic and heat shock by preventing the aggregation of stress-denatured proteins and by disaggregating proteins, also in an autonomous, DnaK-independent fashion. Unfolded proteins bind initially to DnaJ; upon interaction with the DnaJ-bound protein, DnaK hydrolyzes its bound ATP, resulting in the formation of a stable complex. GrpE releases ADP from DnaK; ATP binding to DnaK triggers the release of the substrate protein, thus completing the reaction cycle. Several rounds of ATP-dependent interactions between DnaJ, DnaK and GrpE are required for fully efficient folding. Also involved, together with DnaK and GrpE, in the DNA replication of plasmids through activation of initiation proteins. The polypeptide is Chaperone protein DnaJ (Protochlamydia amoebophila (strain UWE25)).